The following is a 425-amino-acid chain: Protein-glutamate methylesterase/protein-glutamine glutaminase (425 aa).

The 119-residue stretch at 22-140 folds into the Response regulatory domain; sequence RVMVVDDSVV…EVAAADIFRH (119 aa). A 4-aspartylphosphate modification is found at D73. Disordered stretches follow at residues 150-174 and 203-223; these read AAKRRRPATVASPPPDHDDYGSNAS and VQREQQPRSAQAARAMSRPQP. Positions 221–417 constitute a CheB-type methylesterase domain; sequence PQPTLRSFSA…PLQQIAPKLV (197 aa). Active-site residues include S241, H269, and D365.

Belongs to the CheB family. Phosphorylated by CheA. Phosphorylation of the N-terminal regulatory domain activates the methylesterase activity.

The protein localises to the cytoplasm. The catalysed reaction is [protein]-L-glutamate 5-O-methyl ester + H2O = L-glutamyl-[protein] + methanol + H(+). It catalyses the reaction L-glutaminyl-[protein] + H2O = L-glutamyl-[protein] + NH4(+). Involved in chemotaxis. Part of a chemotaxis signal transduction system that modulates chemotaxis in response to various stimuli. Catalyzes the demethylation of specific methylglutamate residues introduced into the chemoreceptors (methyl-accepting chemotaxis proteins or MCP) by CheR. Also mediates the irreversible deamidation of specific glutamine residues to glutamic acid. The polypeptide is Protein-glutamate methylesterase/protein-glutamine glutaminase (Nitrobacter winogradskyi (strain ATCC 25391 / DSM 10237 / CIP 104748 / NCIMB 11846 / Nb-255)).